An 81-amino-acid chain; its full sequence is Protein RALF-like 6 (81 aa).

The signal sequence occupies residues 1-29 (MAAHKKSHIRIFFVSVMIILSLFSGFGEG). 2 disulfides stabilise this stretch: Cys46–Cys54 and Cys66–Cys72.

Belongs to the plant rapid alkalinization factor (RALF) family.

Its subcellular location is the secreted. Functionally, cell signaling peptide that may regulate plant stress, growth, and development. Mediates a rapid alkalinization of extracellular space by mediating a transient increase in the cytoplasmic Ca(2+) concentration leading to a calcium-dependent signaling events through a cell surface receptor and a concomitant activation of some intracellular mitogen-activated protein kinases. The polypeptide is Protein RALF-like 6 (RALFL6) (Arabidopsis thaliana (Mouse-ear cress)).